Consider the following 115-residue polypeptide: Somatostatin-2 (115 aa).

A signal peptide spans 1–18 (MKVCRIHCALALLGLALA). Residues 19–87 (ICSQGAASQP…KEDLRVELER (69 aa)) constitute a propeptide that is removed on maturation. A disulfide bridge links Cys104 with Cys115.

The protein belongs to the somatostatin family.

Its subcellular location is the secreted. Its function is as follows. Somatostatin inhibits the release of somatotropin. The protein is Somatostatin-2 (sst2) of Oncorhynchus mykiss (Rainbow trout).